The chain runs to 199 residues: 7-methyl-GTP pyrophosphatase (199 aa).

The active-site Proton acceptor is Asp-76.

Belongs to the Maf family. YceF subfamily. It depends on a divalent metal cation as a cofactor.

It localises to the cytoplasm. The catalysed reaction is N(7)-methyl-GTP + H2O = N(7)-methyl-GMP + diphosphate + H(+). Its function is as follows. Nucleoside triphosphate pyrophosphatase that hydrolyzes 7-methyl-GTP (m(7)GTP). May have a dual role in cell division arrest and in preventing the incorporation of modified nucleotides into cellular nucleic acids. This chain is 7-methyl-GTP pyrophosphatase, found in Rhizobium meliloti (strain 1021) (Ensifer meliloti).